A 430-amino-acid polypeptide reads, in one-letter code: Enolase (430 aa).

Gln-168 serves as a coordination point for (2R)-2-phosphoglycerate. Glu-210 functions as the Proton donor in the catalytic mechanism. Mg(2+) is bound by residues Asp-247, Glu-288, and Asp-315. 4 residues coordinate (2R)-2-phosphoglycerate: Lys-340, Arg-369, Ser-370, and Lys-391. Lys-340 functions as the Proton acceptor in the catalytic mechanism.

Belongs to the enolase family. The cofactor is Mg(2+).

The protein resides in the cytoplasm. It localises to the secreted. The protein localises to the cell surface. It carries out the reaction (2R)-2-phosphoglycerate = phosphoenolpyruvate + H2O. Its pathway is carbohydrate degradation; glycolysis; pyruvate from D-glyceraldehyde 3-phosphate: step 4/5. Catalyzes the reversible conversion of 2-phosphoglycerate (2-PG) into phosphoenolpyruvate (PEP). It is essential for the degradation of carbohydrates via glycolysis. This chain is Enolase, found in Picosynechococcus sp. (strain ATCC 27264 / PCC 7002 / PR-6) (Agmenellum quadruplicatum).